Consider the following 420-residue polypeptide: tRNA(Ile)-lysidine synthase, chloroplastic (420 aa).

63-68 (SGGQDS) lines the ATP pocket.

This sequence belongs to the tRNA(Ile)-lysidine synthase family.

It is found in the plastid. Its subcellular location is the chloroplast. It carries out the reaction cytidine(34) in tRNA(Ile2) + L-lysine + ATP = lysidine(34) in tRNA(Ile2) + AMP + diphosphate + H(+). Functionally, ligates lysine onto the cytidine present at position 34 of the AUA codon-specific tRNA(Ile) that contains the anticodon CAU, in an ATP-dependent manner. Cytidine is converted to lysidine, thus changing the amino acid specificity of the tRNA from methionine to isoleucine. The chain is tRNA(Ile)-lysidine synthase, chloroplastic from Zygnema circumcarinatum (Green alga).